A 176-amino-acid chain; its full sequence is NAD(P)H-quinone oxidoreductase subunit 6, chloroplastic (176 aa).

The next 5 membrane-spanning stretches (helical) occupy residues 10–30 (FLLV…VLLP), 32–52 (PIFS…LYIL), 61–81 (AQLL…VMFM), 92–112 (LWTV…FSLM), and 152–172 (FFLP…GAIS).

Belongs to the complex I subunit 6 family. In terms of assembly, NDH is composed of at least 16 different subunits, 5 of which are encoded in the nucleus.

The protein localises to the plastid. It is found in the chloroplast thylakoid membrane. It carries out the reaction a plastoquinone + NADH + (n+1) H(+)(in) = a plastoquinol + NAD(+) + n H(+)(out). The enzyme catalyses a plastoquinone + NADPH + (n+1) H(+)(in) = a plastoquinol + NADP(+) + n H(+)(out). Its function is as follows. NDH shuttles electrons from NAD(P)H:plastoquinone, via FMN and iron-sulfur (Fe-S) centers, to quinones in the photosynthetic chain and possibly in a chloroplast respiratory chain. The immediate electron acceptor for the enzyme in this species is believed to be plastoquinone. Couples the redox reaction to proton translocation, and thus conserves the redox energy in a proton gradient. This is NAD(P)H-quinone oxidoreductase subunit 6, chloroplastic (ndhG) from Barbarea verna (Land cress).